A 621-amino-acid chain; its full sequence is DNA-directed RNA polymerase subunit gamma (621 aa).

Mg(2+) contacts are provided by aspartate 463, aspartate 465, and aspartate 467.

This sequence belongs to the RNA polymerase beta' chain family. RpoC1 subfamily. As to quaternary structure, in cyanobacteria the RNAP catalytic core is composed of 2 alpha, 1 beta, 1 beta', 1 gamma and 1 omega subunit. When a sigma factor is associated with the core the holoenzyme is formed, which can initiate transcription. Requires Mg(2+) as cofactor.

It catalyses the reaction RNA(n) + a ribonucleoside 5'-triphosphate = RNA(n+1) + diphosphate. In terms of biological role, DNA-dependent RNA polymerase catalyzes the transcription of DNA into RNA using the four ribonucleoside triphosphates as substrates. The sequence is that of DNA-directed RNA polymerase subunit gamma from Nostoc commune.